A 166-amino-acid chain; its full sequence is Transcription antitermination protein NusB (166 aa).

Over residues 1–18 (MISDESDRFNPRDPKPAD) the composition is skewed to basic and acidic residues. The segment at 1–30 (MISDESDRFNPRDPKPADAGKPSKSAKRRE) is disordered.

This sequence belongs to the NusB family.

Functionally, involved in transcription antitermination. Required for transcription of ribosomal RNA (rRNA) genes. Binds specifically to the boxA antiterminator sequence of the ribosomal RNA (rrn) operons. The chain is Transcription antitermination protein NusB from Pseudomonas fluorescens (strain Pf0-1).